The primary structure comprises 200 residues: Potassium-transporting ATPase KdpC subunit (200 aa).

The chain crosses the membrane as a helical span at residues 7–27 (PALVMIVLFTILTGLIYPLAM).

Belongs to the KdpC family. In terms of assembly, the system is composed of three essential subunits: KdpA, KdpB and KdpC.

The protein resides in the cell inner membrane. Its function is as follows. Part of the high-affinity ATP-driven potassium transport (or Kdp) system, which catalyzes the hydrolysis of ATP coupled with the electrogenic transport of potassium into the cytoplasm. This subunit acts as a catalytic chaperone that increases the ATP-binding affinity of the ATP-hydrolyzing subunit KdpB by the formation of a transient KdpB/KdpC/ATP ternary complex. In Methylocella silvestris (strain DSM 15510 / CIP 108128 / LMG 27833 / NCIMB 13906 / BL2), this protein is Potassium-transporting ATPase KdpC subunit.